A 660-amino-acid chain; its full sequence is Potassium voltage-gated channel subfamily KQT member 1 (660 aa).

Residues 1–18 show a composition bias toward polar residues; sequence MSSEVKSRWSGSGSQKSG. A disordered region spans residues 1 to 67; it reads MSSEVKSRWS…PESRAADSRA (67 aa). Residues 1–113 are Cytoplasmic-facing; that stretch reads MSSEVKSRWS…YNFLERPTGW (113 aa). A compositionally biased stretch (basic and acidic residues) spans 53–67; it reads STDKNPESRAADSRA. Residues 114-135 form a helical membrane-spanning segment; it reads KCFIYHFTVFLIVLVCLIFSVM. Residues 136–146 lie on the Extracellular side of the membrane; it reads STIEQYHYFAN. The chain crosses the membrane as a helical span at residues 147 to 169; the sequence is RALVWMEIVLVVFFGTEYIVRLW. Residues 170–185 lie on the Cytoplasmic side of the membrane; it reads SAGCRSKYVGFWGRLR. A helical membrane pass occupies residues 186–211; that stretch reads FARKPISIIDLIVVVASVIVLCVGSN. The Extracellular segment spans residues 212-219; it reads GQVFATSA. Residues 220 to 235 form a helical; Voltage-sensor membrane-spanning segment; sequence IRGIRFLQILRMLHVD. Topologically, residues 236-253 are cytoplasmic; the sequence is RQGGTWRLLGSVVFIHRQ. Glutamine 237 contributes to the a 1,2-diacyl-sn-glycero-3-phospho-(1D-myo-inositol-4,5-bisphosphate) binding site. The helical transmembrane segment at 254–276 threads the bilayer; the sequence is ELITTLYIGFLGLIFSSYFVYLA. The Extracellular portion of the chain corresponds to 277–292; sequence EKDAVDDSGSQQFGSY. The segment at residues 293–313 is an intramembrane region (pore-forming); it reads ADALWWGVVTVTTIGYGDKVP. Residues 314-315 are Extracellular-facing; that stretch reads QT. A helical membrane pass occupies residues 316-341; the sequence is WIGRTIASCFSVFAISFFALPAGILG. At 342 to 660 the chain is on the cytoplasmic side; sequence SGFALKVQQK…RKDQDNQPDL (319 aa). Residues 399–426 are disordered; sequence SPSPKTKKSVGKRKKLKTDKDNGLNSEK. The segment covering 403-415 has biased composition (basic residues); that stretch reads KTKKSVGKRKKLK. Residues 579 to 615 adopt a coiled-coil conformation; the sequence is KNTIGARLNRVEEKFVHMDQKLNTITDMLHHLVAHQQ.

The protein belongs to the potassium channel family. KQT (TC 1.A.1.15) subfamily. Kv7.1/KCNQ1 sub-subfamily. As to quaternary structure, tetramer. Heterotetramer with KCNE1; targets to the membrane raft. Interacts (via C-terminus) with CALM; forms a heterotetramer in a calcium-independent manner. Interacts with KCNE2; form a heterooligomer complex that targets to the membrane raft and leading to currents with an apparently instantaneous activation, a rapid deactivation process and a linear current-voltage relationship and decreases the amplitude of the outward current. Interacts with KCNE3; four KCNE3 molecules are bound to one KCNQ1 tetramer (4:4 KCNQ1:KCNE3 stoichiometry); alters membrane raft localization; affects KCNQ1 structure and gating properties. Interacts with KCNE4; impairs KCNQ1 localization in lipid rafts and inhibits voltage-gated potassium channel activity. Interacts with KCNE5; impairs KCNQ1 localization in lipid rafts and only conducts current upon strong and continued depolarization. In terms of tissue distribution, expressed only in rectal gland and heart. Faintly expressed in intestine. Undetectable in kidney, brain, testis, liver and gills.

Its subcellular location is the cell membrane. The protein localises to the cytoplasmic vesicle membrane. It localises to the membrane raft. It is found in the endoplasmic reticulum. The protein resides in the basolateral cell membrane. The catalysed reaction is K(+)(in) = K(+)(out). With respect to regulation, PIP2 molecule is essential to activate KCNQ channels by inducing the coupling of the voltage-sensing domain (VSD) and the pore-forming domain (PD). Upon channel activation, PIP2 disrupts the VSD-calmodulin/CALM interactions, causing the release of CALM from the VSD which triggers the opening of the gate. Calcium potentiates KCNQ1 channel current through calcium-bound CALM. Calcium-bound CALM competes with PIP2 to stabilize the channel open state. Its function is as follows. Pore-forming subunit of the voltage-gated potassium (Kv) channel involved in the regulation of cardiomyocyte excitability and important in normal development and functions of myocardium, inner ear, stomach and colon. Associates with KCNE beta subunits that modulates current kinetics. Induces a voltage-dependent by rapidly activating and slowly deactivating potassium-selective outward current. Also promotes a delayed voltage activated potassium current showing outward rectification characteristic. During beta-adrenergic receptor stimulation participates in cardiac repolarization by associating with KCNE1 to form the I(Ks) cardiac potassium current that increases the amplitude and slows down the activation kinetics of outward potassium current I(Ks). When associated with KCNE3, forms the potassium channel that is important for cyclic AMP-stimulated intestinal secretion of chloride ions. When associated with KCNE2, forms a heterooligomer complex leading to currents with an apparently instantaneous activation, a rapid deactivation process and a linear current-voltage relationship and decreases the amplitude of the outward current. When associated with KCNE4, inhibits voltage-gated potassium channel activity. When associated with KCNE5, this complex only conducts current upon strong and continued depolarization. This Squalus acanthias (Spiny dogfish) protein is Potassium voltage-gated channel subfamily KQT member 1.